Reading from the N-terminus, the 427-residue chain is Flotillin-1 (427 aa).

Phosphoserine occurs at positions 19, 163, and 385. The residue at position 387 (Thr387) is a Phosphothreonine.

Belongs to the band 7/mec-2 family. Flotillin subfamily. Heterooligomeric complex of flotillin-1 and flotillin-2 and caveolin-1 and caveolin-2. Interacts with ECPAS.

It is found in the cell membrane. The protein localises to the endosome. It localises to the membrane. The protein resides in the caveola. Its subcellular location is the melanosome. It is found in the membrane raft. May act as a scaffolding protein within caveolar membranes, functionally participating in formation of caveolae or caveolae-like vesicles. In Sus scrofa (Pig), this protein is Flotillin-1 (FLOT1).